Here is a 97-residue protein sequence, read N- to C-terminus: Putative ankyrin repeat protein RBE_0357 (97 aa).

Residues 24 to 54 form an ANK repeat; it reads YGKTALHYAYTKRNIDIIKILLKCPGIKICI.

This is Putative ankyrin repeat protein RBE_0357 from Rickettsia bellii (strain RML369-C).